The following is a 260-amino-acid chain: UPF0246 protein Veis_4789 (260 aa).

Belongs to the UPF0246 family.

This is UPF0246 protein Veis_4789 from Verminephrobacter eiseniae (strain EF01-2).